Here is a 741-residue protein sequence, read N- to C-terminus: Mitofusin-1 (741 aa).

Residues 1 to 584 (MAEPVSPLKH…ASQEELMITL (584 aa)) lie on the Cytoplasmic side of the membrane. The part of a helix bundle domain, formed by helices from N-terminal and C-terminal regions stretch occupies residues 9-73 (KHFVLAKKAI…LSIIGEVLSR (65 aa)). The 250-residue stretch at 72–321 (SRRHMKVAFF…ARLQEFQNFE (250 aa)) folds into the Dynamin-type G domain. Residues 82–89 (GRTSSGKS) form a G1 motif region. 85–90 (SSGKSS) provides a ligand contact to GTP. Residues 108–109 (IT) form a G2 motif region. Residues 178–181 (DSPG) form a G3 motif region. A GTP-binding site is contributed by 237–240 (NRWD). The tract at residues 237–240 (NRWD) is G4 motif. Glu266 is a region of interest (G5 motif). Residues Ser284 and Lys286 each coordinate GTP. Residues 338-364 (EQHTIRAKQILATVKNIMDSVNLAAED) are part of a helix bundle domain, formed by helices from N-terminal and C-terminal regions. Residues 371 to 408 (EEREDQIDRLDFIRNQMNLLTLDVKKKIKEVTEEVANK) adopt a coiled-coil conformation. Residues 585 to 605 (VTGLASVTSRTSMGIIIVGGV) form a helical membrane-spanning segment. Topologically, residues 606–608 (IWK) are mitochondrial intermembrane. Residues 609–629 (TIGWKLLSVSLTMYGALYLYE) form a helical membrane-spanning segment. Residues 630–741 (RLSWTTHAKE…QFLPSSNEES (112 aa)) lie on the Cytoplasmic side of the membrane. A coiled-coil region spans residues 679–734 (RLCQQVDITQKQLEEEIARLPKEIDQLEKIQNNSKLLRNKAVQLENELENFTKQFL). Residues 703 to 734 (DQLEKIQNNSKLLRNKAVQLENELENFTKQFL) are part of a helix bundle domain, formed by helices from N-terminal and C-terminal regions.

Belongs to the TRAFAC class dynamin-like GTPase superfamily. Dynamin/Fzo/YdjA family. Mitofusin subfamily. As to quaternary structure, homodimer, also in the absence of bound GTP. Forms higher oligomers in the presence of a transition state GTP analog. Forms homomultimers and heteromultimers with MFN2. Oligomerization is essential for mitochondrion fusion. Component of a high molecular weight multiprotein complex. Interacts with VAT1. Interacts with THG1L; THG1L probably functions as a guanyl-nucleotide exchange factor/GEF, activating MFN1. In terms of processing, ubiquitinated by non-degradative ubiquitin by PRKN. Deubiquitination by USP30 inhibits mitochondrial fusion. Ubiquitinated by MARCHF5. When mitochondria are depolarized and dysfunctional, it is ubiquitinated by a SCF (SKP1-CUL1-F-box protein) E3 ubiquitin-protein ligase complex that contains FBXO7 and PRKN. As to expression, detected in kidney and heart (at protein level). Ubiquitous. Expressed at slightly higher level in kidney and heart. Isoform 2 may be overexpressed in some tumors, such as lung cancers.

The protein resides in the mitochondrion outer membrane. The protein localises to the cytoplasm. It carries out the reaction GTP + H2O = GDP + phosphate + H(+). Functionally, mitochondrial outer membrane GTPase that mediates mitochondrial clustering and fusion. Membrane clustering requires GTPase activity. It may involve a major rearrangement of the coiled coil domains. Mitochondria are highly dynamic organelles, and their morphology is determined by the equilibrium between mitochondrial fusion and fission events. Overexpression induces the formation of mitochondrial networks (in vitro). Has low GTPase activity. This chain is Mitofusin-1 (MFN1), found in Homo sapiens (Human).